Consider the following 327-residue polypeptide: Phospho-N-acetylmuramoyl-pentapeptide-transferase (327 aa).

The next 10 membrane-spanning stretches (helical) occupy residues 3 to 23, 51 to 71, 75 to 95, 115 to 135, 140 to 160, 172 to 192, 197 to 217, 223 to 243, 248 to 268, and 306 to 326; these read IALIAGIVTFILTIIGIPAFI, TMGGTVFLLTSVLASFVIGLF, LSNGLIMILFILVLYGVVGFL, LFLQLVGGVVFYFFYNQHGAG, IFTVPVQLGFLYVFFVLFWLI, IDGLASISVVISLVAYAVIAV, FDILIVIISMIGGLLGFFVFN, IFMGDVGSLALGGMLAAISIS, WTLLLIGIVYVFETTSVMMQV, and VDFFFWGIGIVGSLLTLAILY.

This sequence belongs to the glycosyltransferase 4 family. MraY subfamily. Mg(2+) is required as a cofactor.

It is found in the cell membrane. The enzyme catalyses UDP-N-acetyl-alpha-D-muramoyl-L-alanyl-gamma-D-glutamyl-L-lysyl-D-alanyl-D-alanine + di-trans,octa-cis-undecaprenyl phosphate = Mur2Ac(oyl-L-Ala-gamma-D-Glu-L-Lys-D-Ala-D-Ala)-di-trans,octa-cis-undecaprenyl diphosphate + UMP. It participates in cell wall biogenesis; peptidoglycan biosynthesis. Functionally, catalyzes the initial step of the lipid cycle reactions in the biosynthesis of the cell wall peptidoglycan: transfers peptidoglycan precursor phospho-MurNAc-pentapeptide from UDP-MurNAc-pentapeptide onto the lipid carrier undecaprenyl phosphate, yielding undecaprenyl-pyrophosphoryl-MurNAc-pentapeptide, known as lipid I. The sequence is that of Phospho-N-acetylmuramoyl-pentapeptide-transferase from Streptococcus sanguinis (strain SK36).